The sequence spans 602 residues: 4-hydroxy-3-methylbut-2-en-1-yl diphosphate synthase (flavodoxin) (602 aa).

Residues Cys508, Cys511, Cys543, and Glu550 each contribute to the [4Fe-4S] cluster site.

Belongs to the IspG family. The cofactor is [4Fe-4S] cluster.

It carries out the reaction (2E)-4-hydroxy-3-methylbut-2-enyl diphosphate + oxidized [flavodoxin] + H2O + 2 H(+) = 2-C-methyl-D-erythritol 2,4-cyclic diphosphate + reduced [flavodoxin]. Its pathway is isoprenoid biosynthesis; isopentenyl diphosphate biosynthesis via DXP pathway; isopentenyl diphosphate from 1-deoxy-D-xylulose 5-phosphate: step 5/6. Its function is as follows. Converts 2C-methyl-D-erythritol 2,4-cyclodiphosphate (ME-2,4cPP) into 1-hydroxy-2-methyl-2-(E)-butenyl 4-diphosphate. The sequence is that of 4-hydroxy-3-methylbut-2-en-1-yl diphosphate synthase (flavodoxin) from Chlamydia trachomatis serovar L2 (strain ATCC VR-902B / DSM 19102 / 434/Bu).